Here is a 31-residue protein sequence, read N- to C-terminus: Cyclotide vico-A (31 aa).

The segment at residues 1 to 31 (GSIPCAESCVYIPCFTGIAGCSCKNKVCYYN) is a cross-link (cyclopeptide (Gly-Asn)). Intrachain disulfides connect Cys5–Cys21, Cys9–Cys23, and Cys14–Cys28.

It belongs to the cyclotide family. Bracelet subfamily. In terms of processing, this is a cyclic peptide.

Its function is as follows. Probably participates in a plant defense mechanism. This chain is Cyclotide vico-A, found in Viola cotyledon (Violeta).